We begin with the raw amino-acid sequence, 112 residues long: Nitrogenase-stabilizing/protective protein NifW (112 aa).

This sequence belongs to the NifW family. As to quaternary structure, homotrimer; associates with NifD.

May protect the nitrogenase Fe-Mo protein from oxidative damage. This chain is Nitrogenase-stabilizing/protective protein NifW, found in Burkholderia vietnamiensis (strain G4 / LMG 22486) (Burkholderia cepacia (strain R1808)).